We begin with the raw amino-acid sequence, 222 residues long: THAP domain-containing protein 6 (222 aa).

The THAP-type zinc finger occupies 1 to 89; that stretch reads MVKCCSAIGC…LKPGVIPSIF (89 aa). The HCFC1-binding motif (HBM) signature appears at 139–142; that stretch reads EHSY. A coiled-coil region spans residues 149-194; that stretch reads KKLKHKLDHVIGELEDTKESLRNVLDREKRFQKSLRKTIRELKDEC.

The sequence is that of THAP domain-containing protein 6 (THAP6) from Homo sapiens (Human).